A 296-amino-acid chain; its full sequence is CCAAT/enhancer-binding protein beta (296 aa).

A required for Lys-133 sumoylation region spans residues 1–22 (MHRLLAWDAACLPPPPAAFRPM). Position 3 is an asymmetric dimethylarginine; by CARM1 (Arg-3). Residues 22-104 (MEVANFYYEP…YGAKPSKKPA (83 aa)) are required for MYC transcriptional repression. Lys-39 bears the N6-acetyllysine; alternate mark. At Lys-39 the chain carries N6-methylated lysine; alternate. N6-acetyllysine; by KAT2A and KAT2B is present on residues Lys-98 and Lys-101. Lys-102 carries the N6-acetyllysine; by KAT2A and KAT2B; alternate modification. Residues Lys-102 and Lys-133 each participate in a glycyl lysine isopeptide (Lys-Gly) (interchain with G-Cter in SUMO2); alternate cross-link. Lys-133 participates in a covalent cross-link: Glycyl lysine isopeptide (Lys-Gly) (interchain with G-Cter in SUMO); alternate. Residue Lys-144 forms a Glycyl lysine isopeptide (Lys-Gly) (interchain with G-Cter in SUMO2) linkage. A disordered region spans residues 171–199 (SGSSGSLSTSSSSSPPGTPSPADAKAAPA). Phosphothreonine; by GSK3-beta is present on Thr-179. O-linked (GlcNAc) serine glycosylation is found at Ser-180 and Ser-181. Ser-184 carries the post-translational modification Phosphoserine; by GSK3-beta. Thr-188 bears the Phosphothreonine; by RPS6KA1, CDK2 and MAPK mark. Glycyl lysine isopeptide (Lys-Gly) (interchain with G-Cter in SUMO2) cross-links involve residues Lys-211 and Lys-213. Phosphothreonine; by RPS6KA1 and PKC/PRKCA is present on Thr-217. The 64-residue stretch at 222–285 (SDEYKMRRER…STLRNLFKQL (64 aa)) folds into the bZIP domain. Residues 226 to 246 (KMRRERNNIAVRKSRDKAKMR) are basic motif. The residue at position 239 (Ser-239) is a Phosphoserine; by PKC/PRKCA. Residues 248-255 (LETQHKVL) form a leucine-zipper region. Phosphoserine; by CaMK2 is present on Ser-276. Lys-283 participates in a covalent cross-link: Glycyl lysine isopeptide (Lys-Gly) (interchain with G-Cter in SUMO2).

It belongs to the bZIP family. C/EBP subfamily. As to quaternary structure, binds DNA as a homodimer and as a heterodimer. Interacts with ATF4. Binds DNA as a heterodimer with ATF4. Interacts with MYB; within the complex, MYB and CEBPB bind to different promoter regions. Can form stable heterodimers with CEBPA, CEBPD and CEBPE. Interacts with SIX1. Isoform 2 and isoform 3 also form heterodimers. Interacts with TRIM28 and PTGES2. Interacts with PRDM16. Interacts with CCDC85B. Forms a complex with THOC5. Interacts with ZNF638; this interaction increases transcriptional activation. Interacts with CIDEA and CIDEC. Interaction with CIDEA increases transcriptional activation of a subset of CEBPB downstream target genes, including ID2, IGF1, PRLR, SOCS1, SOCS3, XDH. Interaction with CIDEC increases transcriptional activation of SOCS1, SOCS3, TGFB1, TGFBR1, ID2 and XDH. Interacts with DDIT3/CHOP. Interacts with EP300; recruits EP300 to chromatin. Interacts with RORA; the interaction disrupts interaction with EP300. Interacts (not methylated) with MED23, MED26, SMARCA2, SMARCB1 and SMARCC1. Interacts with KAT2A and KAT2B. Interacts with ATF5; EP300 is required for ATF5 and CEBPB interaction and DNA binding. Interacts with NFE2L1; the heterodimer represses expression of DSPP during odontoblast differentiation. In terms of processing, sumoylated by polymeric chains of SUMO2 or SUMO3. Sumoylation at Lys-133 is required for inhibition of T-cells proliferation. In adipocytes, sumoylation at Lys-133 by PIAS1 leads to ubiquitination and subsequent proteasomal degradation. Desumoylated by SENP2, which abolishes ubiquitination and stabilizes protein levels. Ubiquitinated, leading to proteasomal degradation. Post-translationally, phosphorylated at Thr-188 by MAPK and CDK2, serves to prime phosphorylation at Thr-179 and Ser-184 by GSK3B and acquire DNA-binding as well as transactivation activities, required to induce adipogenesis. MAPK and CDK2 act sequentially to maintain Thr-188 in the primed phosphorylated state during mitotical cloning expansion and thereby progression of terminal differentiation. Phosphorylation at Thr-217 enhances transactivation activity. Phosphorylation at Ser-276 in response to calcium increases transactivation activity. Phosphorylated at Thr-188 by RPS6KA1. In terms of processing, O-glycosylated, glycosylation at Ser-180 and Ser-181 prevents phosphorylation on Thr-188, Ser-184 and Thr-179 and DNA binding activity which delays the adipocyte differentiation program. Acetylated. Acetylation at Lys-39 is an important and dynamic regulatory event that contributes to its ability to transactivate target genes, including those associated with adipogenesis and adipocyte function. Deacetylation by HDAC1 represses its transactivation activity. Acetylated by KAT2A and KAT2B within a cluster of lysine residues between amino acids 98-102, this acetylation is strongly induced by glucocorticoid treatment and enhances transactivation activity. Post-translationally, methylated. Methylation at Arg-3 by CARM1 and at Lys-39 by EHMT2, inhibits transactivation activity. Methylation is probably inhibited by phosphorylation at Thr-188. As to expression, abundantly expressed in myoblasts. Enriched in brown adipose tissue (BAT) versus white adipose tissue (WAT). Expressed in hepatocytes (at protein level). Expressed in T lymphocytes. The expression in granulosa cells of antral follicles is induced by luteinizing hormone. Expressed in chondrocytes and osteoblasts (at protein level).

It is found in the nucleus. The protein localises to the cytoplasm. In terms of biological role, important transcription factor regulating the expression of genes involved in immune and inflammatory responses. Also plays a significant role in adipogenesis, as well as in the gluconeogenic pathway, liver regeneration, and hematopoiesis. The consensus recognition site is 5'-T[TG]NNGNAA[TG]-3'. Its functional capacity is governed by protein interactions and post-translational protein modifications. During early embryogenesis, plays essential and redundant roles with CEBPA. Has a promitotic effect on many cell types such as hepatocytes and adipocytes but has an antiproliferative effect on T-cells by repressing MYC expression, facilitating differentiation along the T-helper 2 lineage. Binds to regulatory regions of several acute-phase and cytokines genes and plays a role in the regulation of acute-phase reaction and inflammation. Also plays a role in intracellular bacteria killing. During adipogenesis, is rapidly expressed and, after activation by phosphorylation, induces CEBPA and PPARG, which turn on the series of adipocyte genes that give rise to the adipocyte phenotype. The delayed transactivation of the CEBPA and PPARG genes by CEBPB appears necessary to allow mitotic clonal expansion and thereby progression of terminal differentiation. Essential for female reproduction because of a critical role in ovarian follicle development. Restricts osteoclastogenesis. Together with NFE2L1; represses expression of DSPP during odontoblast differentiation. Functionally, essential for gene expression induction in activated macrophages. Plays a major role in immune responses such as CD4(+) T-cell response, granuloma formation and endotoxin shock. Not essential for intracellular bacteria killing. Acts as a dominant negative through heterodimerization with isoform 2. Promotes osteoblast differentiation and osteoclastogenesis. This is CCAAT/enhancer-binding protein beta from Mus musculus (Mouse).